Consider the following 286-residue polypeptide: Undecaprenyl-diphosphatase (286 aa).

7 helical membrane-spanning segments follow: residues 5–25, 55–75, 92–112, 122–142, 185–205, 229–249, and 264–284; these read WFIIKAIIIGIVEGITEFLPV, IDAFTMIIQLGAILAIVVLYW, SGFKFWLNIAVSAVPAGVLGL, LFNPGSVTAALIVGAIWMIFA, IIGAWIVGLSTVAAAEFSFFL, MHIVGLTVGFIVSFIVALIVV, and FAMYRILLGIVLIILSLFNVI.

This sequence belongs to the UppP family.

It localises to the cell membrane. The enzyme catalyses di-trans,octa-cis-undecaprenyl diphosphate + H2O = di-trans,octa-cis-undecaprenyl phosphate + phosphate + H(+). Catalyzes the dephosphorylation of undecaprenyl diphosphate (UPP). Confers resistance to bacitracin. In Clostridium novyi (strain NT), this protein is Undecaprenyl-diphosphatase.